A 172-amino-acid polypeptide reads, in one-letter code: Signal peptidase complex catalytic subunit SEC11 (172 aa).

The Cytoplasmic portion of the chain corresponds to 1-14; that stretch reads MLSSLQNPRQAAAQ. A helical; Signal-anchor for type II membrane protein membrane pass occupies residues 15 to 35; it reads LMNFGLILSTAFMMWKGLSVI. Residues 36-172 lie on the Lumenal side of the membrane; the sequence is TDSPSPIVVV…MGLVVVLQRE (137 aa). Catalysis depends on charge relay system residues Ser-49, His-90, and Asp-115. The tract at residues 158-169 is C-terminal short (CTS) helix; sequence VMLGIMGLVVVL.

This sequence belongs to the peptidase S26B family. In terms of assembly, component of the signal peptidase complex (SPC) composed of a catalytic subunit SEC11 and three accessory subunits SPC1, SPC2 and SPC3. The complex induces a local thinning of the ER membrane which is used to measure the length of the signal peptide (SP) h-region of protein substrates. This ensures the selectivity of the complex towards h-regions shorter than 18-20 amino acids. SPC associates with the translocon complex.

The protein localises to the endoplasmic reticulum membrane. The catalysed reaction is Cleavage of hydrophobic, N-terminal signal or leader sequences from secreted and periplasmic proteins.. Functionally, catalytic component of the signal peptidase complex (SPC) which catalyzes the cleavage of N-terminal signal sequences from nascent proteins as they are translocated into the lumen of the endoplasmic reticulum. Specifically cleaves N-terminal signal peptides that contain a hydrophobic alpha-helix (h-region) shorter than 18-20 amino acids. The sequence is that of Signal peptidase complex catalytic subunit SEC11 (SEC11) from Chaetomium globosum (strain ATCC 6205 / CBS 148.51 / DSM 1962 / NBRC 6347 / NRRL 1970) (Soil fungus).